The chain runs to 463 residues: Glutamate--tRNA ligase (463 aa).

Positions 9–19 (PSPTGYLHVGG) match the 'HIGH' region motif. A compositionally biased stretch (basic and acidic residues) spans 115–129 (AGEKPRYDGTWRPEA). The segment at 115 to 136 (AGEKPRYDGTWRPEAGKTLPAI) is disordered. The 'KMSKS' region signature appears at 241-245 (KLSKR). Lys244 contributes to the ATP binding site.

Belongs to the class-I aminoacyl-tRNA synthetase family. Glutamate--tRNA ligase type 1 subfamily. In terms of assembly, monomer.

Its subcellular location is the cytoplasm. It catalyses the reaction tRNA(Glu) + L-glutamate + ATP = L-glutamyl-tRNA(Glu) + AMP + diphosphate. In terms of biological role, catalyzes the attachment of glutamate to tRNA(Glu) in a two-step reaction: glutamate is first activated by ATP to form Glu-AMP and then transferred to the acceptor end of tRNA(Glu). In Janthinobacterium sp. (strain Marseille) (Minibacterium massiliensis), this protein is Glutamate--tRNA ligase.